The following is a 754-amino-acid chain: 5-methyltetrahydropteroyltriglutamate--homocysteine methyltransferase (754 aa).

5-methyltetrahydropteroyltri-L-glutamate is bound by residues 17-20 (RELK) and K110. L-homocysteine-binding positions include 421-423 (IGS) and E474. L-methionine is bound by residues 421-423 (IGS) and E474. Residues 505-506 (RC) and W551 contribute to the 5-methyltetrahydropteroyltri-L-glutamate site. D589 contributes to the L-homocysteine binding site. D589 contacts L-methionine. E595 contacts 5-methyltetrahydropteroyltri-L-glutamate. Residues H631, C633, and E655 each contribute to the Zn(2+) site. The active-site Proton donor is H684. Residue C716 coordinates Zn(2+).

The protein belongs to the vitamin-B12 independent methionine synthase family. Requires Zn(2+) as cofactor.

The enzyme catalyses 5-methyltetrahydropteroyltri-L-glutamate + L-homocysteine = tetrahydropteroyltri-L-glutamate + L-methionine. It participates in amino-acid biosynthesis; L-methionine biosynthesis via de novo pathway; L-methionine from L-homocysteine (MetE route): step 1/1. Its function is as follows. Catalyzes the transfer of a methyl group from 5-methyltetrahydrofolate to homocysteine resulting in methionine formation. The polypeptide is 5-methyltetrahydropteroyltriglutamate--homocysteine methyltransferase (Synechococcus sp. (strain JA-2-3B'a(2-13)) (Cyanobacteria bacterium Yellowstone B-Prime)).